A 184-amino-acid polypeptide reads, in one-letter code: Cell division protein ZapC (184 aa).

This sequence belongs to the ZapC family. In terms of assembly, interacts directly with FtsZ.

The protein resides in the cytoplasm. Its function is as follows. Contributes to the efficiency of the cell division process by stabilizing the polymeric form of the cell division protein FtsZ. Acts by promoting interactions between FtsZ protofilaments and suppressing the GTPase activity of FtsZ. In Idiomarina loihiensis (strain ATCC BAA-735 / DSM 15497 / L2-TR), this protein is Cell division protein ZapC.